The sequence spans 56 residues: Large ribosomal subunit protein bL32 (56 aa).

Basic residues predominate over residues 1–16 (MAVQKSKKSRSRRDMR). The tract at residues 1 to 56 (MAVQKSKKSRSRRDMRRSHDAIDGPTLSVDSTTGETHRRHHVTADGYYKGRKVVNK) is disordered.

The protein belongs to the bacterial ribosomal protein bL32 family.

This is Large ribosomal subunit protein bL32 from Idiomarina loihiensis (strain ATCC BAA-735 / DSM 15497 / L2-TR).